A 185-amino-acid chain; its full sequence is Acireductone dioxygenase (185 aa).

Residues histidine 96, histidine 98, glutamate 102, and histidine 140 each contribute to the Fe(2+) site. Histidine 96, histidine 98, glutamate 102, and histidine 140 together coordinate Ni(2+).

It belongs to the acireductone dioxygenase (ARD) family. Monomer. Fe(2+) serves as cofactor. The cofactor is Ni(2+).

It carries out the reaction 1,2-dihydroxy-5-(methylsulfanyl)pent-1-en-3-one + O2 = 3-(methylsulfanyl)propanoate + CO + formate + 2 H(+). It catalyses the reaction 1,2-dihydroxy-5-(methylsulfanyl)pent-1-en-3-one + O2 = 4-methylsulfanyl-2-oxobutanoate + formate + 2 H(+). It functions in the pathway amino-acid biosynthesis; L-methionine biosynthesis via salvage pathway; L-methionine from S-methyl-5-thio-alpha-D-ribose 1-phosphate: step 5/6. Its function is as follows. Catalyzes 2 different reactions between oxygen and the acireductone 1,2-dihydroxy-3-keto-5-methylthiopentene (DHK-MTPene) depending upon the metal bound in the active site. Fe-containing acireductone dioxygenase (Fe-ARD) produces formate and 2-keto-4-methylthiobutyrate (KMTB), the alpha-ketoacid precursor of methionine in the methionine recycle pathway. Ni-containing acireductone dioxygenase (Ni-ARD) produces methylthiopropionate, carbon monoxide and formate, and does not lie on the methionine recycle pathway. The sequence is that of Acireductone dioxygenase from Marinobacter nauticus (strain ATCC 700491 / DSM 11845 / VT8) (Marinobacter aquaeolei).